The primary structure comprises 342 residues: Flagellar P-ring protein (342 aa).

Positions 1 to 19 are cleaved as a signal peptide; it reads MKRVFLWLIFVLAFHKLLA.

Belongs to the FlgI family. The basal body constitutes a major portion of the flagellar organelle and consists of four rings (L,P,S, and M) mounted on a central rod.

Its subcellular location is the periplasm. The protein resides in the bacterial flagellum basal body. Functionally, assembles around the rod to form the L-ring and probably protects the motor/basal body from shearing forces during rotation. The protein is Flagellar P-ring protein of Helicobacter pylori (strain G27).